Here is a 101-residue protein sequence, read N- to C-terminus: NADH-quinone oxidoreductase subunit K (101 aa).

The next 3 helical transmembrane spans lie at 4 to 24 (LSDY…GIFV), 29 to 49 (IITL…NFVA), and 61 to 81 (IFVF…LAIL).

The protein belongs to the complex I subunit 4L family. In terms of assembly, NDH-1 is composed of 14 different subunits. Subunits NuoA, H, J, K, L, M, N constitute the membrane sector of the complex.

It is found in the cell inner membrane. The catalysed reaction is a quinone + NADH + 5 H(+)(in) = a quinol + NAD(+) + 4 H(+)(out). Functionally, NDH-1 shuttles electrons from NADH, via FMN and iron-sulfur (Fe-S) centers, to quinones in the respiratory chain. The immediate electron acceptor for the enzyme in this species is believed to be ubiquinone. Couples the redox reaction to proton translocation (for every two electrons transferred, four hydrogen ions are translocated across the cytoplasmic membrane), and thus conserves the redox energy in a proton gradient. The chain is NADH-quinone oxidoreductase subunit K from Ruthia magnifica subsp. Calyptogena magnifica.